The sequence spans 547 residues: Fumarate reductase (CoM/CoB) subunit A (547 aa).

This sequence belongs to the FAD-dependent oxidoreductase 2 family. Subunit A of the heterodimeric fumarate reductase of methanogenic Archaea, composed of subunits A (TfrA) and B (TfrB). It depends on an oxidized flavin as a cofactor.

The protein localises to the cytoplasm. The catalysed reaction is coenzyme B + coenzyme M + fumarate = coenzyme M-coenzyme B heterodisulfide + succinate. Catalyzes the reduction of fumarate with reduced coenzyme M (CoM-S-H) and coenzyme B (CoB-S-H). In vitro, is able to reduces fumarate with reduced benzyl viologen, oxidize CoM-S-H and CoB-S-H to CoM-S-S-CoB with methylene blue, and reduce CoM-S-S-CoB with reduced benzyl viologen. The enzyme has specificity for the two thiol compounds as the CoB--CoM heterodisulfide reductase. The enzyme is very sensitive to oxygen. This Methanothermobacter marburgensis (strain ATCC BAA-927 / DSM 2133 / JCM 14651 / NBRC 100331 / OCM 82 / Marburg) (Methanobacterium thermoautotrophicum) protein is Fumarate reductase (CoM/CoB) subunit A.